Here is a 105-residue protein sequence, read N- to C-terminus: MSKIHVRKKDTVVVISGKDKGKIGEVLSVLPKKGKVIVKDVNVVTKHQKPNRENMQGGIIHKEAPIFSSKVMLYCDKCKSATRISNKILEDGTKVRVCKKCGETF.

It belongs to the universal ribosomal protein uL24 family. As to quaternary structure, part of the 50S ribosomal subunit.

Its function is as follows. One of two assembly initiator proteins, it binds directly to the 5'-end of the 23S rRNA, where it nucleates assembly of the 50S subunit. Functionally, one of the proteins that surrounds the polypeptide exit tunnel on the outside of the subunit. This is Large ribosomal subunit protein uL24 from Clostridium botulinum (strain Langeland / NCTC 10281 / Type F).